Reading from the N-terminus, the 703-residue chain is DNA ligase (703 aa).

The segment at 1-20 is disordered; the sequence is MNDNLDLFSGAAPAAPESGA. Low complexity predominate over residues 9-20; sequence SGAAPAAPESGA. Residues 53–57, 102–103, and Glu-139 contribute to the NAD(+) site; these read DGEYD and SI. The active-site N6-AMP-lysine intermediate is Lys-141. Positions 162, 200, 321, and 345 each coordinate NAD(+). 4 residues coordinate Zn(2+): Cys-439, Cys-442, Cys-457, and Cys-463. A BRCT domain is found at 622 to 703; sequence QTAQPLAGMT…MLALLAGGDR (82 aa).

The protein belongs to the NAD-dependent DNA ligase family. LigA subfamily. The cofactor is Mg(2+). Mn(2+) serves as cofactor.

It carries out the reaction NAD(+) + (deoxyribonucleotide)n-3'-hydroxyl + 5'-phospho-(deoxyribonucleotide)m = (deoxyribonucleotide)n+m + AMP + beta-nicotinamide D-nucleotide.. DNA ligase that catalyzes the formation of phosphodiester linkages between 5'-phosphoryl and 3'-hydroxyl groups in double-stranded DNA using NAD as a coenzyme and as the energy source for the reaction. It is essential for DNA replication and repair of damaged DNA. This chain is DNA ligase, found in Delftia acidovorans (strain DSM 14801 / SPH-1).